Reading from the N-terminus, the 264-residue chain is Teichoic acids export ATP-binding protein TagH (264 aa).

The ABC transporter domain maps to 24-243; sequence IKDALIPKNK…YEQFLKDFKK (220 aa). 57-64 serves as a coordination point for ATP; it reads GINGSGKS.

The protein belongs to the ABC transporter superfamily. Teichoic acids exporter (TC 3.A.1.104.1) family. In terms of assembly, the complex is composed of two ATP-binding proteins (TagH) and two transmembrane proteins (TagG).

Its subcellular location is the cell membrane. It carries out the reaction ATP + H2O + teichoic acidSide 1 = ADP + phosphate + teichoic acidSide 2.. Part of the ABC transporter complex TagGH involved in teichoic acids export. Responsible for energy coupling to the transport system. In Staphylococcus haemolyticus (strain JCSC1435), this protein is Teichoic acids export ATP-binding protein TagH.